The chain runs to 336 residues: Dihydroorotate dehydrogenase (quinone) (336 aa).

Residues 62–66 (AGLDK) and threonine 86 contribute to the FMN site. Lysine 66 is a binding site for substrate. 111–115 (NRMGF) is a substrate binding site. 2 residues coordinate FMN: asparagine 139 and asparagine 172. Asparagine 172 is a substrate binding site. Residue serine 175 is the Nucleophile of the active site. Residue asparagine 177 coordinates substrate. Residues lysine 217 and threonine 245 each contribute to the FMN site. 246–247 (NT) provides a ligand contact to substrate. FMN-binding positions include glycine 268, glycine 297, and 318 to 319 (YS).

This sequence belongs to the dihydroorotate dehydrogenase family. Type 2 subfamily. In terms of assembly, monomer. The cofactor is FMN.

The protein resides in the cell membrane. The catalysed reaction is (S)-dihydroorotate + a quinone = orotate + a quinol. Its pathway is pyrimidine metabolism; UMP biosynthesis via de novo pathway; orotate from (S)-dihydroorotate (quinone route): step 1/1. Its function is as follows. Catalyzes the conversion of dihydroorotate to orotate with quinone as electron acceptor. The protein is Dihydroorotate dehydrogenase (quinone) of Escherichia coli (strain SE11).